A 106-amino-acid polypeptide reads, in one-letter code: uncharacterized protein (106 aa).

Helical transmembrane passes span 53–70 (LLLL…LDII) and 74–93 (ILGL…WTLI).

Its subcellular location is the cell membrane. This is an uncharacterized protein from Bacillus subtilis (strain 168).